Here is a 210-residue protein sequence, read N- to C-terminus: Na(+)-translocating NADH-quinone reductase subunit D (210 aa).

A run of 6 helical transmembrane segments spans residues 14–34, 42–62, 72–92, 103–123, 131–151, and 178–198; these read PIIS…ALAV, LVMT…ISMI, IIVQ…VLQA, VFVG…AYAM, FMDG…VGFV, and NGLL…IWII.

The protein belongs to the NqrDE/RnfAE family. As to quaternary structure, composed of six subunits; NqrA, NqrB, NqrC, NqrD, NqrE and NqrF.

The protein resides in the cell inner membrane. It catalyses the reaction a ubiquinone + n Na(+)(in) + NADH + H(+) = a ubiquinol + n Na(+)(out) + NAD(+). NQR complex catalyzes the reduction of ubiquinone-1 to ubiquinol by two successive reactions, coupled with the transport of Na(+) ions from the cytoplasm to the periplasm. NqrA to NqrE are probably involved in the second step, the conversion of ubisemiquinone to ubiquinol. The chain is Na(+)-translocating NADH-quinone reductase subunit D from Shewanella loihica (strain ATCC BAA-1088 / PV-4).